A 121-amino-acid chain; its full sequence is Basic phospholipase A2 F17 (121 aa).

Cystine bridges form between Cys25–Cys114, Cys27–Cys43, Cys42–Cys94, Cys48–Cys121, Cys49–Cys87, Cys56–Cys80, and Cys74–Cys85. 3 residues coordinate Ca(2+): Tyr26, Gly28, and Gly30. The active site involves His46. Asp47 is a Ca(2+) binding site. Residue Asp88 is part of the active site.

This sequence belongs to the phospholipase A2 family. Group II subfamily. D49 sub-subfamily. When this protein is associated with crotapotin (F5 or F7), it forms the crotoxin protein. The cofactor is Ca(2+). As to expression, expressed by the venom gland.

The protein localises to the secreted. It catalyses the reaction a 1,2-diacyl-sn-glycero-3-phosphocholine + H2O = a 1-acyl-sn-glycero-3-phosphocholine + a fatty acid + H(+). With respect to regulation, activated by heparin. Inhibited by its chaperone crotapotin. Its function is as follows. Snake venom phospholipase A2 (PLA2) that has anticoagulant activity and inhibits bactericial growth of the Gram-negative bacteria Xanthomonas axonopodis pv. passiflorae (in monomeric form). PLA2 catalyzes the calcium-dependent hydrolysis of the 2-acyl groups in 3-sn-phosphoglycerides. In Crotalus durissus terrificus (South American rattlesnake), this protein is Basic phospholipase A2 F17.